Consider the following 592-residue polypeptide: Aspartate--tRNA ligase (592 aa).

Residue glutamate 173 coordinates L-aspartate. The aspartate stretch occupies residues 197–200 (QLFK). Arginine 219 is an L-aspartate binding site. ATP contacts are provided by residues 219–221 (RDE) and glutamine 228. Histidine 448 is an L-aspartate binding site. Glutamate 482 is a binding site for ATP. Residue arginine 489 coordinates L-aspartate. 534–537 (GLDR) lines the ATP pocket.

Belongs to the class-II aminoacyl-tRNA synthetase family. Type 1 subfamily. In terms of assembly, homodimer.

The protein resides in the cytoplasm. It carries out the reaction tRNA(Asp) + L-aspartate + ATP = L-aspartyl-tRNA(Asp) + AMP + diphosphate. Its function is as follows. Catalyzes the attachment of L-aspartate to tRNA(Asp) in a two-step reaction: L-aspartate is first activated by ATP to form Asp-AMP and then transferred to the acceptor end of tRNA(Asp). This chain is Aspartate--tRNA ligase, found in Shewanella baltica (strain OS195).